A 120-amino-acid polypeptide reads, in one-letter code: uncharacterized protein (120 aa).

A disordered region spans residues 79–120 (TGNEIPPEPEQEVVASPVTEQKKAEPSAPPKGSKKKKRGKKK). Over residues 110-120 (GSKKKKRGKKK) the composition is skewed to basic residues.

This is an uncharacterized protein from Schizosaccharomyces pombe (strain 972 / ATCC 24843) (Fission yeast).